Consider the following 62-residue polypeptide: Large ribosomal subunit protein uL30 (62 aa).

This sequence belongs to the universal ribosomal protein uL30 family. As to quaternary structure, part of the 50S ribosomal subunit.

This chain is Large ribosomal subunit protein uL30, found in Halalkalibacterium halodurans (strain ATCC BAA-125 / DSM 18197 / FERM 7344 / JCM 9153 / C-125) (Bacillus halodurans).